The chain runs to 343 residues: Tribbles homolog 2 (343 aa).

Residues 25-50 (EELSSIRSAEPSQSFSPNLGSPSPPE) form a disordered region. Residues 29–45 (SIRSAEPSQSFSPNLGS) show a composition bias toward polar residues. Residues 61-308 (IGKYLLLEPL…SQEILDHPWF (248 aa)) enclose the Protein kinase domain.

The protein belongs to the protein kinase superfamily. CAMK Ser/Thr protein kinase family. Tribbles subfamily. Highly expressed in the thyroid, also present in ovary and cerebrum.

It is found in the cytoplasm. The protein resides in the cytoskeleton. In terms of biological role, interacts with MAPK kinases and regulates activation of MAP kinases. Does not display kinase activity. This chain is Tribbles homolog 2, found in Canis lupus familiaris (Dog).